The sequence spans 261 residues: Carnitinyl-CoA dehydratase (261 aa).

The Nucleophile role is filled by E111. The active-site Proton acceptor is E131.

This sequence belongs to the enoyl-CoA hydratase/isomerase family.

It carries out the reaction (R)-carnitinyl-CoA = crotonobetainyl-CoA + H2O. It functions in the pathway amine and polyamine metabolism; carnitine metabolism. Catalyzes the reversible dehydration of L-carnitinyl-CoA to crotonobetainyl-CoA. This is Carnitinyl-CoA dehydratase from Shigella flexneri.